The chain runs to 995 residues: Polynucleotide 5'-hydroxyl-kinase NOL9 (995 aa).

Disordered stretches follow at residues 18-173 and 271-359; these read EQRE…SSMK and IKVF…YEPP. Composition is skewed to low complexity over residues 75-94 and 110-129; these read TAGAKRPLSNNVSNPDSSPS and VNKSSNVAAKKSAATSKSAK. Acidic residues predominate over residues 279–354; sequence EETDSDEDDI…DIFDTDDLDS (76 aa). 639 to 646 serves as a coordination point for ATP; sequence GGKGVGKS.

The protein belongs to the Clp1 family. NOL9/GRC3 subfamily.

It is found in the nucleus. The protein resides in the nucleolus. In terms of biological role, polynucleotide 5'-kinase involved in rRNA processing. The polypeptide is Polynucleotide 5'-hydroxyl-kinase NOL9 (Drosophila melanogaster (Fruit fly)).